A 382-amino-acid chain; its full sequence is GDSL esterase/lipase At4g01130 (382 aa).

Positions 1-28 (MASDINRRRSFSLLVLIIVMLYGHKGDS) are cleaved as a signal peptide. S41 acts as the Nucleophile in catalysis. Residues N118, N263, N275, and N330 are each glycosylated (N-linked (GlcNAc...) asparagine). Residues D348 and H351 contribute to the active site.

Belongs to the 'GDSL' lipolytic enzyme family.

It is found in the secreted. The chain is GDSL esterase/lipase At4g01130 from Arabidopsis thaliana (Mouse-ear cress).